The following is a 163-amino-acid chain: UPF0262 protein RPD_4278 (163 aa).

The protein belongs to the UPF0262 family.

In Rhodopseudomonas palustris (strain BisB5), this protein is UPF0262 protein RPD_4278.